Consider the following 215-residue polypeptide: Pyrrolidone-carboxylate peptidase (215 aa).

Active-site residues include Glu-80, Cys-143, and His-167.

This sequence belongs to the peptidase C15 family. As to quaternary structure, homotetramer.

It localises to the cytoplasm. It carries out the reaction Release of an N-terminal pyroglutamyl group from a polypeptide, the second amino acid generally not being Pro.. In terms of biological role, removes 5-oxoproline from various penultimate amino acid residues except L-proline. This is Pyrrolidone-carboxylate peptidase from Yersinia pseudotuberculosis serotype O:1b (strain IP 31758).